Reading from the N-terminus, the 172-residue chain is MESRPYSWVALDPDCDHPLDDKEKDKEKHERKCHCDVCCNGNGFFGNDNAFIDQDLAQANLNKQVSDETIIIRDSCDINVTSTDVQAVTSVVTALNAAVVTATLTSIADGVIAELVAQDLLQLTANKQVNRQKLLIECSRGVNVTTVDADIATLISTATNTLVAILVITLVL.

It localises to the spore coat. The sequence is that of Spore coat protein X (cotX) from Bacillus subtilis (strain 168).